We begin with the raw amino-acid sequence, 211 residues long: FMN-dependent NADH:quinone oxidoreductase 3 (211 aa).

An FMN-binding site is contributed by 102-105 (MWNF).

The protein belongs to the azoreductase type 1 family. Homodimer. It depends on FMN as a cofactor.

It carries out the reaction 2 a quinone + NADH + H(+) = 2 a 1,4-benzosemiquinone + NAD(+). The catalysed reaction is N,N-dimethyl-1,4-phenylenediamine + anthranilate + 2 NAD(+) = 2-(4-dimethylaminophenyl)diazenylbenzoate + 2 NADH + 2 H(+). In terms of biological role, quinone reductase that provides resistance to thiol-specific stress caused by electrophilic quinones. Functionally, also exhibits azoreductase activity. Catalyzes the reductive cleavage of the azo bond in aromatic azo compounds to the corresponding amines. This Bacillus cereus (strain ZK / E33L) protein is FMN-dependent NADH:quinone oxidoreductase 3.